The primary structure comprises 1487 residues: Collagen alpha-1(II) chain (1487 aa).

Positions 1 to 25 (MIRLGAPQTLVLLTLLVAAVLRCQG) are cleaved as a signal peptide. A propeptide spans 26–181 (QDVQEAGSCV…PPGLGGNFAA (156 aa)) (N-terminal propeptide). Positions 32-90 (GSCVQDGQRYNDKDVWKPEPCRICVCDTGTVLCDDIICEDVKDCLSPEIPFGECCPICP) constitute a VWFC domain. The segment at 97 to 1237 (SGQPGPKGQK…PREKGPDPLQ (1141 aa)) is disordered. Composition is skewed to basic and acidic residues over residues 105-116 (QKGEPGDIKDIV) and 133-154 (PRGD…RDGE). Positions 158-173 (PGNPGPPGPPGPPGPP) are enriched in pro residues. The residue at position 190 (Lys190) is a 5-hydroxylysine. O-linked (Gal...) hydroxylysine glycosylation is present at Lys190. Residues 201-1214 (GPMGPMGPRG…PGPPGPPGPP (1014 aa)) form a triple-helical region region. Residues 208–217 (PRGPPGPAGA) show a composition bias toward pro residues. The span at 218 to 239 (PGPQGFQGNPGEPGEPGVSGPM) shows a compositional bias: low complexity. Residues 241–250 (PRGPPGPPGK) are compositionally biased toward pro residues. Over residues 251 to 265 (PGDDGEAGKPGKAGE) the composition is skewed to basic and acidic residues. Residues Lys287, Lys299, and Lys308 each carry the 5-hydroxylysine modification. Lys287, Lys299, and Lys308 each carry an O-linked (Gal...) hydroxylysine glycan. 2 stretches are compositionally biased toward low complexity: residues 310 to 320 (ESGSPGENGSP) and 335 to 350 (TGPA…DGQP). Residues 360-369 (GPAGGPGFPG) show a composition bias toward gly residues. Composition is skewed to low complexity over residues 370 to 382 (APGA…PTGA) and 391 to 431 (PRGE…AGAP). Lys374 is subject to 5-hydroxylysine. O-linked (Gal...) hydroxylysine glycosylation occurs at Lys374. Residues 433 to 442 (FPGPRGPPGP) show a composition bias toward pro residues. Residues Lys608 and Lys620 each carry the 5-hydroxylysine modification. 2 O-linked (Gal...) hydroxylysine glycosylation sites follow: Lys608 and Lys620. 2 stretches are compositionally biased toward low complexity: residues 622–631 (LPGAPGLRGL) and 656–667 (QGAPGPSGFQGL). A 4-hydroxyproline mark is found at Pro659 and Pro668. At Pro670 the chain carries 3-hydroxyproline. Pro671 and Pro674 each carry 4-hydroxyproline. A compositionally biased stretch (basic and acidic residues) spans 764-775 (KGDRGDVGEKGP). 2 stretches are compositionally biased toward low complexity: residues 833–848 (AGFA…PGAK) and 877–913 (PTGV…SNGN). The residue at position 907 (Pro907) is a 3-hydroxyproline. 4-hydroxyproline is present on residues Pro908, Pro914, and Pro920. A compositionally biased stretch (pro residues) spans 1069–1079 (APGPPGSPGPA). Residues 1115–1129 (RGDKGEAGEPGERGL) show a composition bias toward basic and acidic residues. Lys1130 carries the post-translational modification 5-hydroxylysine. Residue Lys1130 is glycosylated (O-linked (Gal...) hydroxylysine). A 3-hydroxyproline modification is found at Pro1144. A compositionally biased stretch (low complexity) spans 1148–1157 (SGDQGASGPA). Pro1181 is subject to 4-hydroxyproline. Pro1186 carries the 3-hydroxyproline modification. Pro1187 carries the post-translational modification 4-hydroxyproline. The span at 1199–1216 (AGPPGNPGPPGPPGPPGP) shows a compositional bias: pro residues. Pro1201 bears the 3-hydroxyproline mark. 4-hydroxyproline is present on residues Pro1202 and Pro1205. At Pro1207 the chain carries 3-hydroxyproline. Pro1208 and Pro1211 each carry 4-hydroxyproline. Pro1213 is modified (3-hydroxyproline). Residue Pro1214 is modified to 4-hydroxyproline. The nonhelical region (C-terminal) stretch occupies residues 1215 to 1241 (GPGIDMSAFAGLGPREKGPDPLQYMRA). Positions 1253-1487 (AEVDATLKSL…GVDIGPVCFL (235 aa)) constitute a Fibrillar collagen NC1 domain. Intrachain disulfides connect Cys1283/Cys1315, Cys1323/Cys1485, and Cys1393/Cys1438. Residues Asp1301, Asn1303, Gln1304, Cys1306, and Asp1309 each contribute to the Ca(2+) site. Asn1388 carries an N-linked (GlcNAc...) asparagine glycan.

It belongs to the fibrillar collagen family. As to quaternary structure, homotrimers of alpha 1(II) chains. Post-translationally, the N-telopeptide is covalently linked to the helical COL2 region of alpha 1(IX), alpha 2(IX) and alpha 3(IX) chain. The C-telopeptide is covalently linked to an another site in the helical region of alpha 3(IX) COL2. In terms of processing, contains mostly 4-hydroxyproline. Prolines at the third position of the tripeptide repeating unit (G-X-P) are 4-hydroxylated in some or all of the chains. Contains 3-hydroxyproline at a few sites. This modification occurs on the first proline residue in the sequence motif Gly-Pro-Hyp, where Hyp is 4-hydroxyproline. Post-translationally, lysine residues at the third position of the tripeptide repeating unit (G-X-Y) are 5-hydroxylated in some or all of the chains. In terms of processing, O-glycosylated on hydroxylated lysine residues. The O-linked glycan consists of a Glc-Gal disaccharide. As to expression, isoform 2 is highly expressed in juvenile chondrocyte and low in fetal chondrocyte.

The protein resides in the secreted. Its subcellular location is the extracellular space. The protein localises to the extracellular matrix. Functionally, type II collagen is specific for cartilaginous tissues. It is essential for the normal embryonic development of the skeleton, for linear growth and for the ability of cartilage to resist compressive forces. This Homo sapiens (Human) protein is Collagen alpha-1(II) chain.